The sequence spans 105 residues: Large ribosomal subunit protein uL24 (105 aa).

Belongs to the universal ribosomal protein uL24 family. Part of the 50S ribosomal subunit.

In terms of biological role, one of two assembly initiator proteins, it binds directly to the 5'-end of the 23S rRNA, where it nucleates assembly of the 50S subunit. Its function is as follows. One of the proteins that surrounds the polypeptide exit tunnel on the outside of the subunit. In Thioalkalivibrio sulfidiphilus (strain HL-EbGR7), this protein is Large ribosomal subunit protein uL24.